We begin with the raw amino-acid sequence, 103 residues long: MFILGKSNYTNFIYGHLVIRHIKYKLFDDYKKLIKKLSSKLKTSNSTKANLGDNFSLTLPTWPFFILSWFLHIRTLEFSSNGNKTANSISSVFFLFPKLLNVV.

Its subcellular location is the plastid. It is found in the chloroplast. This is an uncharacterized protein from Auxenochlorella pyrenoidosa (Freshwater green alga).